The following is a 486-amino-acid chain: MKGKVAQKRAAASPSGVGEVIRVMPAVVDVEFPHGGVPEVLGALESELEYAGEKLVLEVAQHLGDRMVRCVAMGSTDSLSRGDKFISTGNQMMAPVGRGTLGRVFDVLGRPIDGLGSVSSDVEFRPIHAKAPSLSEQRVAAEVLVTGIKVVDLLAPYLKGGKVGLFGGAGVGKTVLIMELISNVARAHKGFSVFAGVGERTREGNDLYREMVESGVISRDEPSKSQAVLVYGQMNEPPGARMRVALTALTMAEYFRDSEGQDVLFFVDNVFRFTQSGSEVSALLGRIPSAVGYQPTLAAEMGAMQERITSTNTGSITSVQAIYVPADDLTDPAPAASFAHLDSTTVLSRQISELGIYPAVDPLESTSQALSPEVVGSEHYEVAQEVKRILQTYKSLQDIIAILGMDELSQEDKLLVARARKIQRFLSQPFHVAEVFTGHPGSFVSLEDTVRSFKGLVEGQYDDLPEAAFYMVGGIDDAVKKAASLK.

167–174 is an ATP binding site; it reads GGAGVGKT.

It belongs to the ATPase alpha/beta chains family. As to quaternary structure, F-type ATPases have 2 components, CF(1) - the catalytic core - and CF(0) - the membrane proton channel. CF(1) has five subunits: alpha(3), beta(3), gamma(1), delta(1), epsilon(1). CF(0) has three main subunits: a(1), b(2) and c(9-12). The alpha and beta chains form an alternating ring which encloses part of the gamma chain. CF(1) is attached to CF(0) by a central stalk formed by the gamma and epsilon chains, while a peripheral stalk is formed by the delta and b chains.

It is found in the cell inner membrane. It carries out the reaction ATP + H2O + 4 H(+)(in) = ADP + phosphate + 5 H(+)(out). Functionally, produces ATP from ADP in the presence of a proton gradient across the membrane. The catalytic sites are hosted primarily by the beta subunits. This is ATP synthase subunit beta from Anaplasma marginale (strain St. Maries).